The chain runs to 291 residues: Formamidopyrimidine-DNA glycosylase (291 aa).

Pro2 acts as the Schiff-base intermediate with DNA in catalysis. The active-site Proton donor is Glu3. The active-site Proton donor; for beta-elimination activity is the Lys58. Residues His104, Arg123, and Lys166 each coordinate DNA. The FPG-type zinc finger occupies 257-291 (KVYDREGEPCPTCGGTVQRFVQNGRSTFWCPKCQK). Arg281 functions as the Proton donor; for delta-elimination activity in the catalytic mechanism.

This sequence belongs to the FPG family. As to quaternary structure, monomer. Zn(2+) serves as cofactor.

It catalyses the reaction Hydrolysis of DNA containing ring-opened 7-methylguanine residues, releasing 2,6-diamino-4-hydroxy-5-(N-methyl)formamidopyrimidine.. The catalysed reaction is 2'-deoxyribonucleotide-(2'-deoxyribose 5'-phosphate)-2'-deoxyribonucleotide-DNA = a 3'-end 2'-deoxyribonucleotide-(2,3-dehydro-2,3-deoxyribose 5'-phosphate)-DNA + a 5'-end 5'-phospho-2'-deoxyribonucleoside-DNA + H(+). Its function is as follows. Involved in base excision repair of DNA damaged by oxidation or by mutagenic agents. Acts as a DNA glycosylase that recognizes and removes damaged bases. Has a preference for oxidized purines, such as 7,8-dihydro-8-oxoguanine (8-oxoG). Has AP (apurinic/apyrimidinic) lyase activity and introduces nicks in the DNA strand. Cleaves the DNA backbone by beta-delta elimination to generate a single-strand break at the site of the removed base with both 3'- and 5'-phosphates. The polypeptide is Formamidopyrimidine-DNA glycosylase (Rhodopseudomonas palustris (strain ATCC BAA-98 / CGA009)).